Here is a 34-residue protein sequence, read N- to C-terminus: Photosystem II reaction center protein M (34 aa).

The chain crosses the membrane as a helical span at residues 5–25 (ILAFIAIVLFISVPTAFLLII).

The protein belongs to the PsbM family. As to quaternary structure, PSII is composed of 1 copy each of membrane proteins PsbA, PsbB, PsbC, PsbD, PsbE, PsbF, PsbH, PsbI, PsbJ, PsbK, PsbL, PsbM, PsbT, PsbX, PsbY, PsbZ, Psb30/Ycf12, at least 3 peripheral proteins of the oxygen-evolving complex and a large number of cofactors. It forms dimeric complexes.

The protein localises to the plastid. It localises to the chloroplast thylakoid membrane. In terms of biological role, one of the components of the core complex of photosystem II (PSII). PSII is a light-driven water:plastoquinone oxidoreductase that uses light energy to abstract electrons from H(2)O, generating O(2) and a proton gradient subsequently used for ATP formation. It consists of a core antenna complex that captures photons, and an electron transfer chain that converts photonic excitation into a charge separation. This subunit is found at the monomer-monomer interface. This is Photosystem II reaction center protein M from Cycas taitungensis (Prince sago).